We begin with the raw amino-acid sequence, 557 residues long: 2-succinyl-5-enolpyruvyl-6-hydroxy-3-cyclohexene-1-carboxylate synthase (557 aa).

The tract at residues 183 to 206 (YGGTEHPPVAPPLPPRRAPRAAAP) is disordered.

It belongs to the TPP enzyme family. MenD subfamily. As to quaternary structure, homodimer. Requires Mg(2+) as cofactor. Mn(2+) is required as a cofactor. It depends on thiamine diphosphate as a cofactor.

The catalysed reaction is isochorismate + 2-oxoglutarate + H(+) = 5-enolpyruvoyl-6-hydroxy-2-succinyl-cyclohex-3-ene-1-carboxylate + CO2. The protein operates within quinol/quinone metabolism; 1,4-dihydroxy-2-naphthoate biosynthesis; 1,4-dihydroxy-2-naphthoate from chorismate: step 2/7. Its pathway is quinol/quinone metabolism; menaquinone biosynthesis. In terms of biological role, catalyzes the thiamine diphosphate-dependent decarboxylation of 2-oxoglutarate and the subsequent addition of the resulting succinic semialdehyde-thiamine pyrophosphate anion to isochorismate to yield 2-succinyl-5-enolpyruvyl-6-hydroxy-3-cyclohexene-1-carboxylate (SEPHCHC). The polypeptide is 2-succinyl-5-enolpyruvyl-6-hydroxy-3-cyclohexene-1-carboxylate synthase (Halorhodospira halophila (strain DSM 244 / SL1) (Ectothiorhodospira halophila (strain DSM 244 / SL1))).